An 875-amino-acid polypeptide reads, in one-letter code: Receptor-like protein 33 (875 aa).

An N-terminal signal peptide occupies residues 1–23 (MSLIPITFYFLFLFFSNFRGVFA). Over 24 to 822 (VPNIHLCHFE…GESETLESEQ (799 aa)) the chain is Extracellular. Residues Asn-65, Asn-103, Asn-133, Asn-146, and Asn-181 are each glycosylated (N-linked (GlcNAc...) asparagine). LRR repeat units lie at residues 110–133 (FHFLTTLDLSYNHLSGQISSSIGN), 134–157 (LSHLTTLDLSGNNFSGWIPSSLGN), 159–182 (FHLTSLHLYDNNFGGEIPSSLGNL), 183–205 (SYLTFLDLSTNNFVGEIPSSFGS), 206–230 (LNQLSILRLDNNKLSGNLPLEVINL), 231–254 (TKLSEISLSHNQFTGTLPPNITSL), 256–278 (ILESFSASGNNFVGTIPSSLFTI), 280–302 (SITLIFLDNNQLSGTLEFGNISS), 303–327 (PSNLLVLQLGGNNLRGPIPTSISRL), and 329–351 (NLRTLDLSHFNIQGQVDFNIFSH). N-linked (GlcNAc...) asparagine glycosylation is found at Asn-229 and Asn-250. Asn-299 carries N-linked (GlcNAc...) asparagine glycosylation. The LRR 11; degenerate repeat unit spans residues 352–377 (LKLLGNLYLSHSNTTTTIDLNAVLSC). 3 N-linked (GlcNAc...) asparagine glycosylation sites follow: Asn-364, Asn-395, and Asn-411. 15 LRR repeats span residues 378 to 401 (FKMLISLDLSGNHVLVTNKSSVSD), 404 to 427 (LGLIGSLNLSGCGITEFPDILRTQ), 428 to 451 (RQMRTLDISNNKIKGQVPSWLLLQ), 455 to 477 (MHISNNNFIGFERSTKLEKTVVP), 479 to 502 (PSMKHFFGSNNNFSGKIPSFICSL), 503 to 528 (RSLIILDLSNNNFSGAIPPCVGKFKS), 530 to 549 (LSDLNLRRNRLSGSLPKTII), 550 to 573 (KSLRSLDVSHNELEGKLPRSLIHF), 575 to 596 (TLEVLNVESNRINDTFPFWLSS), 597 to 619 (LKKLQVLVLRSNAFHGRIHKTRF), 620 to 643 (PKLRIIDISRNHFNGTLPSDCFVE), 686 to 710 (LKIYTALDFSGNKFEGEIPRSIGLL), 711 to 734 (KELHILNLSSNGFTGHIPSSMGNL), 735 to 758 (RELESLDVSRNKLSGEIPQELGNL), and 760 to 783 (YLAYMNFSHNQLVGQVPGGTQFRT). N-linked (GlcNAc...) asparagine glycosylation is found at Asn-490 and Asn-514. N-linked (GlcNAc...) asparagine glycosylation is present at Asn-587. N-linked (GlcNAc...) asparagine glycosylation occurs at Asn-633. N-linked (GlcNAc...) asparagine glycosylation is found at Asn-717, Asn-757, and Asn-765. A helical membrane pass occupies residues 823–843 (VLSWIAAAIGFTPGIVLGLTI). At 844–875 (GHIVLSSKPRWFFKVLYINNSRRRRRTRSEKS) the chain is on the cytoplasmic side.

It belongs to the RLP family.

It is found in the cell membrane. The polypeptide is Receptor-like protein 33 (Arabidopsis thaliana (Mouse-ear cress)).